The following is a 114-amino-acid chain: Non-specific lipid-transfer protein 1 (114 aa).

The N-terminal stretch at 1-23 is a signal peptide; the sequence is MEIAGKIACFVVLCMVVAAPCAE. Cystine bridges form between Cys-27–Cys-73, Cys-37–Cys-50, Cys-51–Cys-96, and Cys-71–Cys-110.

Belongs to the plant LTP family. As to expression, high expression in leaf epidermis and shoot apex, and also in root epidermis during seedling germination.

In terms of biological role, plant non-specific lipid-transfer proteins transfer phospholipids as well as galactolipids across membranes. Binds cis-unsaturated fatty acids and jasmonic acid with a higher affinity than linear chain fatty acids. Formation of the complex with jasmonic acid results in a conformational change facilitating the LPT1 binding on the elicitin plasma membrane receptor that is known to be involved in plant defense induction. May also play a role in wax or cutin deposition in the cell walls of expanding epidermal cells and certain secretory tissues. The sequence is that of Non-specific lipid-transfer protein 1 (LTP1) from Nicotiana tabacum (Common tobacco).